We begin with the raw amino-acid sequence, 173 residues long: MSMSANTMIFMILGASVVMAIACLMDMNALLDRFHNYILPHLRGEDRVCHCNCGRHHIHYVIPYDGDQSVVDASENYFVTDSVTKQEIDLMLGLLLGFCISWFLVWMDGVLHCAVRAWRAGRRYDGSWTWLPKLCSLRELGRRPHRPFEEAAGNMVHVKQKLYHNGHPSPRHL.

Transmembrane regions (helical) follow at residues 5-25 (ANTM…ACLM) and 90-110 (LMLG…MDGV). Ser-169 is subject to Phosphoserine.

Belongs to the TMEM240 family.

Its subcellular location is the synapse. The protein resides in the cell membrane. The polypeptide is Transmembrane protein 240 (TMEM240) (Homo sapiens (Human)).